A 408-amino-acid polypeptide reads, in one-letter code: GTPase Obg (408 aa).

The Obg domain occupies 1–159 (MKFVDEVSIR…RDLKMEMKVL (159 aa)). A disordered region spans residues 127 to 148 (NTRFKSSTNRAPRQTTPGKPGE). The span at 129-143 (RFKSSTNRAPRQTTP) shows a compositional bias: polar residues. In terms of domain architecture, OBG-type G spans 160–333 (ADVGLLGLPN…LSHDLMRYLE (174 aa)). Residues 166–173 (GLPNAGKS), 191–195 (FTTLV), 213–216 (DIPG), 283–286 (NKAD), and 314–316 (SAI) contribute to the GTP site. Residues Ser-173 and Thr-193 each coordinate Mg(2+). Positions 385–401 (GDDDGWDDDFEDDEDGP) are enriched in acidic residues. The interval 385–408 (GDDDGWDDDFEDDEDGPEIIYVRD) is disordered.

The protein belongs to the TRAFAC class OBG-HflX-like GTPase superfamily. OBG GTPase family. In terms of assembly, monomer. Requires Mg(2+) as cofactor.

The protein localises to the cytoplasm. Functionally, an essential GTPase which binds GTP, GDP and possibly (p)ppGpp with moderate affinity, with high nucleotide exchange rates and a fairly low GTP hydrolysis rate. Plays a role in control of the cell cycle, stress response, ribosome biogenesis and in those bacteria that undergo differentiation, in morphogenesis control. The protein is GTPase Obg of Pseudomonas putida (strain ATCC 700007 / DSM 6899 / JCM 31910 / BCRC 17059 / LMG 24140 / F1).